A 161-amino-acid polypeptide reads, in one-letter code: Large ribosomal subunit protein uL11 (161 aa).

It belongs to the universal ribosomal protein uL11 family. Part of the ribosomal stalk of the 50S ribosomal subunit. Interacts with L10 and the large rRNA to form the base of the stalk. L10 forms an elongated spine to which L12 dimers bind in a sequential fashion forming a multimeric L10(L12)X complex.

Functionally, forms part of the ribosomal stalk which helps the ribosome interact with GTP-bound translation factors. The polypeptide is Large ribosomal subunit protein uL11 (Methanosarcina barkeri (strain Fusaro / DSM 804)).